The primary structure comprises 962 residues: Translation initiation factor IF-2 (962 aa).

The disordered stretch occupies residues 99-365; that stretch reads VKAAQTQAAP…GKKGKKLKLE (267 aa). The segment covering 117–141 has biased composition (basic and acidic residues); the sequence is DAAKARAEAAARAEARAKAEAEAAK. The segment covering 145-155 has biased composition (low complexity); that stretch reads AKAGNKAKPAA. Positions 173–216 are enriched in basic and acidic residues; the sequence is KPAEESKAEKAQADKMPSKKPAEPKEKAAKPKHERNGKGKDAKK. Residues 219-234 show a composition bias toward low complexity; that stretch reads KPAAPAVPQPVVSAEE. Residues 235-269 are compositionally biased toward basic and acidic residues; that stretch reads QAQRDEEARRAAALRAHQEALLKEKQERQARREAM. The span at 270–283 shows a compositional bias: low complexity; it reads KQQAEQQAKAAQEA. The span at 338–354 shows a compositional bias: basic and acidic residues; sequence GGRDRNNARNGDDERVR. Positions 462–631 constitute a tr-type G domain; that stretch reads PRPPVVTVMG…LLEAEVLELT (170 aa). Positions 471 to 478 are G1; it reads GHVDHGKT. A GTP-binding site is contributed by 471 to 478; the sequence is GHVDHGKT. Positions 496–500 are G2; that stretch reads GITQH. The G3 stretch occupies residues 517 to 520; it reads DTPG. Residues 517–521 and 571–574 each bind GTP; these read DTPGH and NKID. The segment at 571–574 is G4; it reads NKID. Residues 607–609 are G5; the sequence is SAK.

The protein belongs to the TRAFAC class translation factor GTPase superfamily. Classic translation factor GTPase family. IF-2 subfamily.

The protein resides in the cytoplasm. In terms of biological role, one of the essential components for the initiation of protein synthesis. Protects formylmethionyl-tRNA from spontaneous hydrolysis and promotes its binding to the 30S ribosomal subunits. Also involved in the hydrolysis of GTP during the formation of the 70S ribosomal complex. The protein is Translation initiation factor IF-2 of Neisseria meningitidis serogroup C (strain 053442).